We begin with the raw amino-acid sequence, 673 residues long: DNA ligase (673 aa).

NAD(+) contacts are provided by residues 38–42 (DSVYD), 87–88 (SL), and Glu-119. Lys-121 acts as the N6-AMP-lysine intermediate in catalysis. NAD(+)-binding residues include Arg-142, Glu-179, Lys-296, and Lys-320. Residues Cys-414, Cys-417, Cys-432, and Cys-438 each contribute to the Zn(2+) site. The BRCT domain maps to 595-673 (VVKSEIAGKT…EEAFLKLLKS (79 aa)).

The protein belongs to the NAD-dependent DNA ligase family. LigA subfamily. Mg(2+) serves as cofactor. The cofactor is Mn(2+).

The enzyme catalyses NAD(+) + (deoxyribonucleotide)n-3'-hydroxyl + 5'-phospho-(deoxyribonucleotide)m = (deoxyribonucleotide)n+m + AMP + beta-nicotinamide D-nucleotide.. In terms of biological role, DNA ligase that catalyzes the formation of phosphodiester linkages between 5'-phosphoryl and 3'-hydroxyl groups in double-stranded DNA using NAD as a coenzyme and as the energy source for the reaction. It is essential for DNA replication and repair of damaged DNA. The sequence is that of DNA ligase from Coxiella burnetii (strain CbuK_Q154) (Coxiella burnetii (strain Q154)).